A 291-amino-acid polypeptide reads, in one-letter code: Porphobilinogen deaminase (291 aa).

Cys-233 is subject to S-(dipyrrolylmethanemethyl)cysteine.

Belongs to the HMBS family. As to quaternary structure, monomer. It depends on dipyrromethane as a cofactor.

The enzyme catalyses 4 porphobilinogen + H2O = hydroxymethylbilane + 4 NH4(+). It functions in the pathway porphyrin-containing compound metabolism; protoporphyrin-IX biosynthesis; coproporphyrinogen-III from 5-aminolevulinate: step 2/4. Functionally, tetrapolymerization of the monopyrrole PBG into the hydroxymethylbilane pre-uroporphyrinogen in several discrete steps. In Ruminiclostridium josui (Clostridium josui), this protein is Porphobilinogen deaminase (hemC).